The chain runs to 191 residues: Thymidine kinase (191 aa).

Residues 15 to 22 and 88 to 91 each bind ATP; these read GPMYSGKT and DEAQ. Glutamate 89 acts as the Proton acceptor in catalysis. Zn(2+) contacts are provided by cysteine 145, cysteine 148, cysteine 183, and cysteine 186.

This sequence belongs to the thymidine kinase family. Homotetramer.

It localises to the cytoplasm. It carries out the reaction thymidine + ATP = dTMP + ADP + H(+). The sequence is that of Thymidine kinase from Clostridium botulinum (strain Hall / ATCC 3502 / NCTC 13319 / Type A).